We begin with the raw amino-acid sequence, 477 residues long: Glutamate--tRNA ligase (477 aa).

Residues 8-18 (PSPTGTLHIGT) carry the 'HIGH' region motif. The short motif at 247-251 (KLSKR) is the 'KMSKS' region element. Lysine 250 is an ATP binding site.

Belongs to the class-I aminoacyl-tRNA synthetase family. Glutamate--tRNA ligase type 1 subfamily. In terms of assembly, monomer.

It localises to the cytoplasm. The catalysed reaction is tRNA(Glu) + L-glutamate + ATP = L-glutamyl-tRNA(Glu) + AMP + diphosphate. Functionally, catalyzes the attachment of glutamate to tRNA(Glu) in a two-step reaction: glutamate is first activated by ATP to form Glu-AMP and then transferred to the acceptor end of tRNA(Glu). This is Glutamate--tRNA ligase from Synechococcus sp. (strain CC9605).